The following is a 257-amino-acid chain: Protein UL133 (257 aa).

Helical transmembrane passes span 14–34 (WGVP…IWCL) and 45–65 (PGIA…AYLI). Residues 149–232 (PTVFVPPPSE…AMPQMPPGVA (84 aa)) form a disordered region. Residues 164–175 (VIPPQPPTPTSE) are compositionally biased toward pro residues. Residues 179 to 193 (KKGRAKDKPKGRPKN) show a composition bias toward basic residues. Residues 214–228 (GGPPDASPPAMPQMP) are compositionally biased toward pro residues.

The protein resides in the host Golgi apparatus membrane. This is Protein UL133 (UL133) from Human cytomegalovirus (strain Merlin) (HHV-5).